The sequence spans 341 residues: Inactive caspase-12 (341 aa).

One can recognise a CARD domain in the interval 1–92 (MADEKPSNGV…QLSSDISSDG (92 aa)). Phosphoserine is present on residues S85 and S90. Active-site residues include H172 and C220.

The protein belongs to the peptidase C14A family. In terms of tissue distribution, widely expressed, with highest levels in lung.

May function as a negative regulator of inflammatory responses and innate immunity. May reduce cytokine release in response to bacterial lipopolysaccharide during infection. Reduces activation of NF-kappa-B in response to TNF. May lack protease activity. This Homo sapiens (Human) protein is Inactive caspase-12 (CASP12).